Consider the following 226-residue polypeptide: Cold-regulated 413 inner membrane protein 2, chloroplastic (226 aa).

The N-terminal 76 residues, 1–76, are a transit peptide targeting the chloroplast; sequence MASLCLSSSR…RKRGSSVVCY (76 aa). The Stromal portion of the chain corresponds to 77-79; that stretch reads ATP. The chain crosses the membrane as a helical span at residues 80-100; sequence MLSVHNLQWISTISCVALMFA. Topologically, residues 101 to 103 are chloroplast intermembrane; that stretch reads RGT. Residues 104-124 traverse the membrane as a helical segment; it reads GIHKSFVVPLFALQAPMGIVS. Residues 125-129 are Stromal-facing; the sequence is WMKGE. A helical membrane pass occupies residues 130–150; sequence YGIWAAFLALLTRLFFSFPVE. The Chloroplast intermembrane portion of the chain corresponds to 151 to 152; that stretch reads LE. A helical transmembrane segment spans residues 153–173; that stretch reads LPFIALLLVIVAPYQVMSIRG. Topologically, residues 174 to 176 are stromal; sequence KQE. Residues 177–197 form a helical membrane-spanning segment; the sequence is GAILSLAISCFLAFQHFSRAG. Topologically, residues 198–205 are chloroplast intermembrane; it reads TLQKAFDQ. Residues 206–226 form a helical membrane-spanning segment; that stretch reads NSVLATVAIIGVTVVSFLFLI.

This sequence belongs to the Cold-regulated 413 protein family.

It localises to the plastid. The protein resides in the chloroplast inner membrane. The protein is Cold-regulated 413 inner membrane protein 2, chloroplastic (COR413IM2) of Arabidopsis thaliana (Mouse-ear cress).